A 251-amino-acid polypeptide reads, in one-letter code: Pyrroloquinoline-quinone synthase (251 aa).

Belongs to the PqqC family.

It carries out the reaction 6-(2-amino-2-carboxyethyl)-7,8-dioxo-1,2,3,4,7,8-hexahydroquinoline-2,4-dicarboxylate + 3 O2 = pyrroloquinoline quinone + 2 H2O2 + 2 H2O + H(+). It functions in the pathway cofactor biosynthesis; pyrroloquinoline quinone biosynthesis. In terms of biological role, ring cyclization and eight-electron oxidation of 3a-(2-amino-2-carboxyethyl)-4,5-dioxo-4,5,6,7,8,9-hexahydroquinoline-7,9-dicarboxylic-acid to PQQ. The polypeptide is Pyrroloquinoline-quinone synthase (Pseudomonas entomophila (strain L48)).